A 156-amino-acid polypeptide reads, in one-letter code: S-ribosylhomocysteine lyase (156 aa).

Fe cation-binding residues include H56, H60, and C123.

It belongs to the LuxS family. Homodimer. The cofactor is Fe cation.

It carries out the reaction S-(5-deoxy-D-ribos-5-yl)-L-homocysteine = (S)-4,5-dihydroxypentane-2,3-dione + L-homocysteine. Functionally, involved in the synthesis of autoinducer 2 (AI-2) which is secreted by bacteria and is used to communicate both the cell density and the metabolic potential of the environment. The regulation of gene expression in response to changes in cell density is called quorum sensing. Catalyzes the transformation of S-ribosylhomocysteine (RHC) to homocysteine (HC) and 4,5-dihydroxy-2,3-pentadione (DPD). This is S-ribosylhomocysteine lyase from Staphylococcus saprophyticus subsp. saprophyticus (strain ATCC 15305 / DSM 20229 / NCIMB 8711 / NCTC 7292 / S-41).